Consider the following 244-residue polypeptide: Prolactin-7D1 (244 aa).

Residues 1–30 (MLPSLIQPCSSGTLLMLLMSNLFLWEKVSS) form the signal peptide. 2 cysteine pairs are disulfide-bonded: Cys99–Cys215 and Cys232–Cys240.

It belongs to the somatotropin/prolactin family.

The protein localises to the secreted. The polypeptide is Prolactin-7D1 (Prl7d1) (Mus musculus (Mouse)).